Reading from the N-terminus, the 168-residue chain is Shikimate kinase (168 aa).

11 to 16 (GAGKTT) is a binding site for ATP. Thr15 contacts Mg(2+). Residues Asp33, Arg57, and Gly78 each contribute to the substrate site. Arg118 contacts ATP. Arg136 contributes to the substrate binding site. Arg153 lines the ATP pocket.

The protein belongs to the shikimate kinase family. In terms of assembly, monomer. Mg(2+) is required as a cofactor.

Its subcellular location is the cytoplasm. The catalysed reaction is shikimate + ATP = 3-phosphoshikimate + ADP + H(+). Its pathway is metabolic intermediate biosynthesis; chorismate biosynthesis; chorismate from D-erythrose 4-phosphate and phosphoenolpyruvate: step 5/7. Functionally, catalyzes the specific phosphorylation of the 3-hydroxyl group of shikimic acid using ATP as a cosubstrate. The polypeptide is Shikimate kinase (Enterococcus faecalis (strain ATCC 700802 / V583)).